Reading from the N-terminus, the 113-residue chain is Transmembrane protein 256 (113 aa).

The N-terminal stretch at 1 to 29 is a signal peptide; that stretch reads MAGPAAAFRRLGALSGAAALGFASYGAHG. The Extracellular portion of the chain corresponds to 30–63; it reads AQFPDAYGKELFDKANKHHFLHSLALLGVPHCRK. Position 43 is an N6-acetyllysine (K43). Residues 64 to 84 traverse the membrane as a helical segment; that stretch reads PLWAGLLLASGTTLFCTSFYY. Residues 85-92 lie on the Cytoplasmic side of the membrane; that stretch reads QALSGDPS. The chain crosses the membrane as a helical span at residues 93 to 113; that stretch reads IQTLAPAGGTLLLLGWLALAL.

Belongs to the TMEM256 family.

The protein localises to the membrane. This chain is Transmembrane protein 256 (TMEM256), found in Homo sapiens (Human).